Here is a 308-residue protein sequence, read N- to C-terminus: Protoheme IX farnesyltransferase (308 aa).

Transmembrane regions (helical) follow at residues 20-40 (VLAY…VTAI), 53-73 (PLLI…ANTF), 102-122 (NALV…WWTT), 124-144 (LLSG…YTLL), 149-169 (TSQN…IGWS), 170-190 (AITD…FFWT), 227-249 (LIYT…WLYM), 254-276 (VAGA…GEPV), and 288-308 (YLAV…PTLF).

This sequence belongs to the UbiA prenyltransferase family. Protoheme IX farnesyltransferase subfamily.

It localises to the cell membrane. It catalyses the reaction heme b + (2E,6E)-farnesyl diphosphate + H2O = Fe(II)-heme o + diphosphate. It participates in porphyrin-containing compound metabolism; heme O biosynthesis; heme O from protoheme: step 1/1. Its function is as follows. Converts heme B (protoheme IX) to heme O by substitution of the vinyl group on carbon 2 of heme B porphyrin ring with a hydroxyethyl farnesyl side group. This chain is Protoheme IX farnesyltransferase, found in Mycobacterium leprae (strain TN).